We begin with the raw amino-acid sequence, 866 residues long: Fibrinogen alpha chain (866 aa).

The first 19 residues, 1–19, serve as a signal peptide directing secretion; it reads MFSMRIVCLVLSVVGTAWT. Ser-22 is modified (phosphoserine). The tract at residues 36-38 is alpha-chain polymerization, binding distal domain of another fibrin gamma chain; sequence GPR. At Ser-45 the chain carries Phosphoserine; by FAM20C. Ser-50 carries the phosphoserine modification. Residue Ser-56 is modified to Phosphoserine; by FAM20C. Residues 68–631 adopt a coiled-coil conformation; sequence CRMKGLIDEV…GHAKSRPVRD (564 aa). The disordered stretch occupies residues 262 to 460; it reads ERPGGNEITR…SGSTTTTRRS (199 aa). The span at 270–299 shows a compositional bias: low complexity; that stretch reads TRGGSTSYGTGSETESPRNPSSAGSWNSGS. A phosphoserine mark is found at Ser-281, Ser-291, and Ser-294. The O-linked (GalNAc...) threonine glycan is linked to Thr-320. Lys-322 participates in a covalent cross-link: Isoglutamyl lysine isopeptide (Lys-Gln) (interchain with Q-41 in alpha-2-antiplasmin). Gln-347 is covalently cross-linked (Isoglutamyl lysine isopeptide (Gln-Lys) (interchain with K-?)). Ser-351 is a glycosylation site (O-linked (GalNAc...) serine). The segment covering 354–391 has biased composition (polar residues); it reads PGSTGTWNPGSSERGSAGHWTSESSVSGSTGQWHSESG. A Phosphoserine; by FAM20C modification is found at Ser-364. Gln-385 participates in a covalent cross-link: Isoglutamyl lysine isopeptide (Gln-Lys) (interchain with K-?). Thr-412 carries the phosphothreonine modification. The span at 424–449 shows a compositional bias: basic and acidic residues; it reads TRREYHTEKLVTSKGDKELRTGKEKV. Residues 450 to 460 are compositionally biased toward low complexity; sequence TSGSTTTTRRS. At Ser-451 the chain carries Phosphoserine. A glycan (N-linked (GlcNAc...) asparagine; in variant Caracas-2) is linked at Ser-453. Cys-461 and Cys-491 are joined by a disulfide. Ser-501 is subject to Phosphoserine. At Thr-505 the chain carries Phosphothreonine. Ser-524 is subject to Phosphoserine; by FAM20C. Isoglutamyl lysine isopeptide (Lys-Gln) (interchain with Q-?) cross-links involve residues Lys-527 and Lys-558. A disordered region spans residues 543-638; sequence ETESRGSESG…VRDCDDVLQT (96 aa). At Ser-560 the chain carries Phosphoserine; by FAM20C. A 4-hydroxyproline; by P4HA1 modification is found at Pro-565. Isoglutamyl lysine isopeptide (Lys-Gln) (interchain with Q-?) cross-links involve residues Lys-575, Lys-581, and Lys-599. A compositionally biased stretch (low complexity) spans 575–589; it reads KSSSYSKQFTSSTSY. Positions 594-617 are enriched in basic and acidic residues; that stretch reads STFESKSYKMADEAGSEADHEGTH. Ser-609 carries the phosphoserine; by FAM20C modification. Residues 618 to 627 show a composition bias toward basic residues; sequence STKRGHAKSR. The Fibrinogen C-terminal domain occupies 623–864; that stretch reads HAKSRPVRDC…AVRMKIRPLV (242 aa). An N-linked (GlcNAc...) asparagine glycan is attached at Asn-686. Ca(2+) is bound by residues Asp-791, Asp-793, Trp-795, and Glu-797. An intrachain disulfide couples Cys-799 to Cys-812.

In terms of assembly, heterohexamer; disulfide linked. Contains 2 sets of 3 non-identical chains (alpha, beta and gamma). The 2 heterotrimers are in head to head conformation with the N-termini in a small central domain. As to quaternary structure, (Microbial infection) Interacts with Staphylococcus aureus protein Fib; this interaction inhibits fibrinogen-dependent platelet aggregation and protects the bacteria form phagocytosis. In terms of processing, the alpha chain is normally not N-glycosylated, even though glycosylation at Asn-686 was observed when a fragment of the protein was expressed in insect cells. It is well known that heterologous expression of isolated domains can lead to adventitious protein modifications. Besides, glycosylation at Asn-686 is supported by large-scale glycoproteomics studies, but the evidence is still quite tenuous. Most likely, Asn-686 is not glycosylated in the healthy human body, or only with low efficiency. Post-translationally, O-glycosylated. Forms F13A-mediated cross-links between a glutamine and the epsilon-amino group of a lysine residue, forming fibronectin-fibrinogen heteropolymers. In terms of processing, about one-third of the alpha chains in the molecules in blood were found to be phosphorylated. Post-translationally, conversion of fibrinogen to fibrin is triggered by thrombin, which cleaves fibrinopeptides A and B from alpha and beta chains, and thus exposes the N-terminal polymerization sites responsible for the formation of the soft clot. The soft clot is converted into the hard clot by factor XIIIA which catalyzes the epsilon-(gamma-glutamyl)lysine cross-linking between gamma chains (stronger) and between alpha chains (weaker) of different monomers. Phosphorylated by FAM20C in the extracellular medium. In terms of tissue distribution, detected in blood plasma (at protein level).

It localises to the secreted. Functionally, cleaved by the protease thrombin to yield monomers which, together with fibrinogen beta (FGB) and fibrinogen gamma (FGG), polymerize to form an insoluble fibrin matrix. Fibrin has a major function in hemostasis as one of the primary components of blood clots. In addition, functions during the early stages of wound repair to stabilize the lesion and guide cell migration during re-epithelialization. Was originally thought to be essential for platelet aggregation, based on in vitro studies using anticoagulated blood. However, subsequent studies have shown that it is not absolutely required for thrombus formation in vivo. Enhances expression of SELP in activated platelets via an ITGB3-dependent pathway. Maternal fibrinogen is essential for successful pregnancy. Fibrin deposition is also associated with infection, where it protects against IFNG-mediated hemorrhage. May also facilitate the immune response via both innate and T-cell mediated pathways. The sequence is that of Fibrinogen alpha chain (FGA) from Homo sapiens (Human).